A 315-amino-acid polypeptide reads, in one-letter code: Pantothenate synthetase (315 aa).

45–52 (MGALHEGH) serves as a coordination point for ATP. His52 (proton donor) is an active-site residue. Position 77 (Gln77) interacts with (R)-pantoate. Position 77 (Gln77) interacts with beta-alanine. 163-166 (GEKD) provides a ligand contact to ATP. Gln169 contributes to the (R)-pantoate binding site. Residues Val192 and 200-203 (MSSR) contribute to the ATP site.

Belongs to the pantothenate synthetase family. As to quaternary structure, homodimer.

Its subcellular location is the cytoplasm. It carries out the reaction (R)-pantoate + beta-alanine + ATP = (R)-pantothenate + AMP + diphosphate + H(+). Its pathway is cofactor biosynthesis; (R)-pantothenate biosynthesis; (R)-pantothenate from (R)-pantoate and beta-alanine: step 1/1. Functionally, catalyzes the condensation of pantoate with beta-alanine in an ATP-dependent reaction via a pantoyl-adenylate intermediate. This is Pantothenate synthetase from Mycobacterium ulcerans (strain Agy99).